Consider the following 379-residue polypeptide: Isocitrate dehydrogenase [NAD] subunit 2, mitochondrial (379 aa).

The transit peptide at 1-27 directs the protein to the mitochondrion; it reads MSMLSTLRTAGSLRTFSRSACYSFQRF. Positions 129, 139, 160, and 247 each coordinate substrate. Mg(2+)-binding residues include D247, D273, and D277.

This sequence belongs to the isocitrate and isopropylmalate dehydrogenases family. In terms of assembly, octamer of two non-identical subunits IDH1 and IDH2. Mg(2+) serves as cofactor. It depends on Mn(2+) as a cofactor.

Its subcellular location is the mitochondrion. The catalysed reaction is D-threo-isocitrate + NAD(+) = 2-oxoglutarate + CO2 + NADH. Its function is as follows. Performs an essential role in the oxidative function of the citric acid cycle and is involved in glutamate biosynthesis. Also binds RNA; specifically to the 5'-untranslated leaders of mitochondrial mRNAs. This is Isocitrate dehydrogenase [NAD] subunit 2, mitochondrial (idh2) from Schizosaccharomyces pombe (strain 972 / ATCC 24843) (Fission yeast).